Consider the following 519-residue polypeptide: Ribonuclease Y 1 (519 aa).

The helical transmembrane segment at 3 to 23 threads the bilayer; it reads VPIVILAIIAIVVGVVGGYYL. Positions 92-120 are enriched in basic and acidic residues; the sequence is QREETLDRKDNSLEKRENSLNRRDKKLSA. The disordered stretch occupies residues 92-124; that stretch reads QREETLDRKDNSLEKRENSLNRRDKKLSAEEQN. The 64-residue stretch at 209–272 folds into the KH domain; that stretch reads TITVVTLPND…EVAKIALEKL (64 aa). An HD domain is found at 335–428; it reads ALAHSIEVAK…VSTADIISAT (94 aa).

The protein belongs to the RNase Y family.

Its subcellular location is the cell membrane. Functionally, endoribonuclease that initiates mRNA decay. The sequence is that of Ribonuclease Y 1 from Levilactobacillus brevis (strain ATCC 367 / BCRC 12310 / CIP 105137 / JCM 1170 / LMG 11437 / NCIMB 947 / NCTC 947) (Lactobacillus brevis).